The following is a 349-amino-acid chain: tRNA N6-adenosine threonylcarbamoyltransferase (349 aa).

The Fe cation site is built by His118 and His122. Substrate contacts are provided by residues 141–145 (LVSGG), Asp174, Gly187, and Asn280. Residue Asp308 participates in Fe cation binding.

Belongs to the KAE1 / TsaD family. Requires Fe(2+) as cofactor.

Its subcellular location is the cytoplasm. The catalysed reaction is L-threonylcarbamoyladenylate + adenosine(37) in tRNA = N(6)-L-threonylcarbamoyladenosine(37) in tRNA + AMP + H(+). Required for the formation of a threonylcarbamoyl group on adenosine at position 37 (t(6)A37) in tRNAs that read codons beginning with adenine. Is involved in the transfer of the threonylcarbamoyl moiety of threonylcarbamoyl-AMP (TC-AMP) to the N6 group of A37, together with TsaE and TsaB. TsaD likely plays a direct catalytic role in this reaction. This is tRNA N6-adenosine threonylcarbamoyltransferase from Acidovorax sp. (strain JS42).